We begin with the raw amino-acid sequence, 153 residues long: NAD(P)H-quinone oxidoreductase subunit N (153 aa).

It belongs to the complex I NdhN subunit family. NDH-1 can be composed of about 15 different subunits; different subcomplexes with different compositions have been identified which probably have different functions.

The protein localises to the cellular thylakoid membrane. It catalyses the reaction a plastoquinone + NADH + (n+1) H(+)(in) = a plastoquinol + NAD(+) + n H(+)(out). It carries out the reaction a plastoquinone + NADPH + (n+1) H(+)(in) = a plastoquinol + NADP(+) + n H(+)(out). NDH-1 shuttles electrons from an unknown electron donor, via FMN and iron-sulfur (Fe-S) centers, to quinones in the respiratory and/or the photosynthetic chain. The immediate electron acceptor for the enzyme in this species is believed to be plastoquinone. Couples the redox reaction to proton translocation, and thus conserves the redox energy in a proton gradient. Cyanobacterial NDH-1 also plays a role in inorganic carbon-concentration. The chain is NAD(P)H-quinone oxidoreductase subunit N from Parasynechococcus marenigrum (strain WH8102).